The chain runs to 742 residues: MTTIKTSNLGFPRLGRTREWKKAIESYWAKKISKEELDQTLTDLHKENLLLQKYYHLDSIPVGDFSLYDHILDTSLLFNIIPERFQGRTIDDDLLFDIARGNKDHVASALIKWFNTNYHYIVPEWDNVEPKVSRNVLLDRFKYAQSLNVNAHPVIVGPITFVKLSKGGHQTFEEKVKTLLPLYKEVFESLIDAGAEYIQVDEPILVTDDSESYENITREAYDYFEKAGVAKKLVIQTYFERAHLKFLSSLPVGGLGLDFVHDNGYNLKQIEAGDFDKSKTLYAGIIDGRNVWASDIEAKKVLIDKLLAHTNELVIQPSSSLLHVPVSLDDETLDTSVGEGLSFATEKLDELDALRRLLNQNDSVKYDKLKARYERFQNQSFKNLDYDFESVRTSRQSPFAQRIEQQQKRLNLPDLPTTTIGSFPQSREVRKYRADWKNKRITDEAYETFLKNEIARWIKIQEDIGLDVLVHGEFERNDMVEFFGEKLQGFLVTKFGWVQSYGSRAVKPPIIYGDVKWTAPLTVDETVYAQSLTDKPVKGMLTGPVTILNWSFERVDLPRKVVQDQIALAINEEVLALEAAGIKVIQVDEPALREGLPLRSEYHEQYLKDAVLSFKLATSSVRDETQIHTHMCYSQFGQIIHAIHDLDADVISIETSRSHGDLIKDFEDINYDLGIGLGVYDIHSPRIPTKEEITTAINRSLQQIDRSLFWVNPDCGLKTRKEEEVKDALTVLVNAVKAKRQE.

Residues 18–21 and Lys112 each bind 5-methyltetrahydropteroyltri-L-glutamate; that span reads REWK. Residues 420 to 422 and Glu473 contribute to the L-homocysteine site; that span reads IGS. L-methionine is bound by residues 420–422 and Glu473; that span reads IGS. Trp550 contributes to the 5-methyltetrahydropteroyltri-L-glutamate binding site. Asp588 serves as a coordination point for L-homocysteine. Residue Asp588 coordinates L-methionine. Glu594 provides a ligand contact to 5-methyltetrahydropteroyltri-L-glutamate. Zn(2+)-binding residues include His630, Cys632, and Glu654. The active-site Proton donor is the His683. Residue Cys715 coordinates Zn(2+).

The protein belongs to the vitamin-B12 independent methionine synthase family. Zn(2+) is required as a cofactor.

The catalysed reaction is 5-methyltetrahydropteroyltri-L-glutamate + L-homocysteine = tetrahydropteroyltri-L-glutamate + L-methionine. It functions in the pathway amino-acid biosynthesis; L-methionine biosynthesis via de novo pathway; L-methionine from L-homocysteine (MetE route): step 1/1. Catalyzes the transfer of a methyl group from 5-methyltetrahydrofolate to homocysteine resulting in methionine formation. The chain is 5-methyltetrahydropteroyltriglutamate--homocysteine methyltransferase from Staphylococcus aureus (strain JH9).